The chain runs to 268 residues: Ribosome maturation factor RimP (268 aa).

Disordered regions lie at residues 1-41 and 223-268; these read MGSA…GRGG and LVEP…EMTR. Low complexity predominate over residues 32–41; the sequence is PSGSARGRGG. The span at 248-257 shows a compositional bias: basic and acidic residues; that stretch reads ESNDDGREAG.

This sequence belongs to the RimP family.

The protein resides in the cytoplasm. Its function is as follows. Required for maturation of 30S ribosomal subunits. This chain is Ribosome maturation factor RimP, found in Frankia casuarinae (strain DSM 45818 / CECT 9043 / HFP020203 / CcI3).